The primary structure comprises 169 residues: Myelin basic protein (169 aa).

Position 1 is an N-acetylalanine (Ala-1). A disordered region spans residues 1 to 114; sequence AAQKRPSQRS…GRGLSLSRFS (114 aa). Position 7 is a phosphoserine; in C5 and C6 (Ser-7). Ser-10 is modified (phosphoserine). Tyr-12 carries the phosphotyrosine modification. A Phosphoserine modification is found at Ser-17. A Phosphothreonine modification is found at Thr-18. Residue Arg-23 is modified to Citrulline; in form C8b. A Citrulline modification is found at Arg-29. Thr-33 carries the phosphothreonine modification. Phosphoserine is present on Ser-38. The residue at position 41 (Arg-41) is a Citrulline; alternate. The residue at position 41 (Arg-41) is an Omega-N-methylarginine; alternate. Positions 43–87 are induces experimental autoimmune encephalomyelitis (EAE) 1; sequence FGSDRGAPKRGSGKDGHHAARTTHYGSLPQKAQGHRPQDENPVVH. Arg-47 bears the Citrulline; in form C8b mark. The residue at position 47 (Arg-47) is an Omega-N-methylarginine. Ser-54 bears the Phosphoserine; in C4, C5 and C6 mark. Position 63 is a citrulline (Arg-63). The residue at position 65 (Thr-65) is a Phosphothreonine. At Tyr-67 the chain carries Phosphotyrosine. Thr-94 carries the post-translational modification Phosphothreonine. Arg-96 is modified (citrulline; in form C2, C3, C8a and C8b). Thr-97 is modified (phosphothreonine; by MAPK; in C3, C4, C5 and C6). A Deamidated glutamine; in form C5 modification is found at Gln-102. A Citrulline; alternate modification is found at Arg-106. Omega-N-methylarginine; alternate is present on Arg-106. At Arg-106 the chain carries Symmetric dimethylarginine; alternate. Arg-112 carries the citrulline modification. Ser-114 carries the post-translational modification Phosphoserine. Residues 114-122 are induces experimental autoimmune encephalomyelitis (EAE) 2; sequence SWGAEGQKP. Gln-120 bears the Deamidated glutamine; in form C3 mark. Lys-121 bears the N6-acetyllysine mark. Arg-129 carries the post-translational modification Citrulline. Residues 133–169 are disordered; the sequence is YKSAHKGLKGHDAQGTLSKIFKLGGRDSRSGSPMARR. Residue Gln-146 is modified to Deamidated glutamine; in form C2. Arg-158 carries the citrulline modification. Position 160 is a phosphoserine; in C4 and C6 (Ser-160). A Citrulline; in form C3 modification is found at Arg-161. Phosphoserine; in form C3, C5 and C6 is present on Ser-164. Residues Arg-168 and Arg-169 each carry the citrulline modification.

Belongs to the myelin basic protein family. Homodimer; self-associates in the presence of lysolipid. Post-translationally, at least 6 charge isomers; C1 (the most cationic and least modified form), C2, C3, C4, C5 and C6 (the least cationic form); are produced as a result of optional post-translational modifications, such as phosphorylation of serine or threonine residues, deamidation of glutamine or asparagine residues, citrullination and methylation of arginine residues. In terms of processing, phosphorylated by TAOK2, VRK2, MAPK11, MAPK12, MAPK14 and MINK1. Proteolytically cleaved in B cell lysosomes by cathepsin CTSG which degrades the major immunogenic MBP epitope and prevents the activation of MBP-specific autoreactive T cells. In terms of tissue distribution, found in both the central and the peripheral nervous system.

Its subcellular location is the myelin membrane. Its function is as follows. Is, with PLP, the most abundant protein component of the myelin membrane in the CNS. Has a role in both the formation and stabilization of this compact multilayer arrangement of bilayers. Each splice variant and charge isomer may have a specialized function in the assembly of an optimized, biochemically functional myelin membrane. This is Myelin basic protein (MBP) from Bos taurus (Bovine).